Reading from the N-terminus, the 223-residue chain is Probable transaldolase (223 aa).

Residue Lys91 is the Schiff-base intermediate with substrate of the active site.

This sequence belongs to the transaldolase family. Type 3B subfamily.

The protein localises to the cytoplasm. It catalyses the reaction D-sedoheptulose 7-phosphate + D-glyceraldehyde 3-phosphate = D-erythrose 4-phosphate + beta-D-fructose 6-phosphate. It participates in carbohydrate degradation; pentose phosphate pathway; D-glyceraldehyde 3-phosphate and beta-D-fructose 6-phosphate from D-ribose 5-phosphate and D-xylulose 5-phosphate (non-oxidative stage): step 2/3. Its function is as follows. Transaldolase is important for the balance of metabolites in the pentose-phosphate pathway. The polypeptide is Probable transaldolase (Prosthecochloris aestuarii (strain DSM 271 / SK 413)).